The sequence spans 455 residues: METSLETLWSQVLERLQLQLSRPTFETWIKTANAEQLDENRLVIRTPNPFARNWLQKYYVKTIRDVVHEILGHPVEIQIEIAQGDSNATISAPEVASPPPTASPVENTNTSQRQQASLNPKYVFSRYVVGPNNRMAHAACLAVAESPGREFNPLFLCGGVGLGKTHLMQAIGHYRLEISPNSRIFYISTEQFTNDLIAAIRKDGMQKFREHYRAVDVMLVDDIQFIEGKEYTQEEFFHTFNTLHEAGKQVVLASDRPPSQIPRLQERLCSRFSMGLIADIQPPDLETRMAILQKKAEYENIRLPREVIEYIASSYTSNIRELEGALIRAVAYISISGLPMNVENIAPVLNPPTAKISASPESIINAVADTYGISIDDLKGNSRRREISMARQIGMYLMRQHTDLSLPKIGEEFGGKDHTTVMYSCDKVSDLQKKNPELAQSLRQLGDRIKLANQP.

The tract at residues 1-73 (METSLETLWS…RDVVHEILGH (73 aa)) is domain I, interacts with DnaA modulators. Residues 73–116 (HPVEIQIEIAQGDSNATISAPEVASPPPTASPVENTNTSQRQQA) form a domain II region. A disordered region spans residues 92–116 (APEVASPPPTASPVENTNTSQRQQA). The span at 104–116 (PVENTNTSQRQQA) shows a compositional bias: polar residues. A domain III, AAA+ region region spans residues 117–333 (SLNPKYVFSR…GALIRAVAYI (217 aa)). Residues Gly161, Gly163, Lys164, and Thr165 each contribute to the ATP site. Positions 334–455 (SISGLPMNVE…GDRIKLANQP (122 aa)) are domain IV, binds dsDNA.

It belongs to the DnaA family. In terms of assembly, oligomerizes as a right-handed, spiral filament on DNA at oriC.

The protein resides in the cytoplasm. Plays an essential role in the initiation and regulation of chromosomal replication. ATP-DnaA binds to the origin of replication (oriC) to initiate formation of the DNA replication initiation complex once per cell cycle. Binds the DnaA box (a 9 base pair repeat at the origin) and separates the double-stranded (ds)DNA. Forms a right-handed helical filament on oriC DNA; dsDNA binds to the exterior of the filament while single-stranded (ss)DNA is stabiized in the filament's interior. The ATP-DnaA-oriC complex binds and stabilizes one strand of the AT-rich DNA unwinding element (DUE), permitting loading of DNA polymerase. After initiation quickly degrades to an ADP-DnaA complex that is not apt for DNA replication. Binds acidic phospholipids. In Acaryochloris marina (strain MBIC 11017), this protein is Chromosomal replication initiator protein DnaA.